We begin with the raw amino-acid sequence, 473 residues long: ATP synthase subunit beta (473 aa).

Position 158–165 (158–165 (GGAGVGKT)) interacts with ATP.

The protein belongs to the ATPase alpha/beta chains family. F-type ATPases have 2 components, CF(1) - the catalytic core - and CF(0) - the membrane proton channel. CF(1) has five subunits: alpha(3), beta(3), gamma(1), delta(1), epsilon(1). CF(0) has three main subunits: a(1), b(2) and c(9-12). The alpha and beta chains form an alternating ring which encloses part of the gamma chain. CF(1) is attached to CF(0) by a central stalk formed by the gamma and epsilon chains, while a peripheral stalk is formed by the delta and b chains.

It localises to the cell membrane. The catalysed reaction is ATP + H2O + 4 H(+)(in) = ADP + phosphate + 5 H(+)(out). Its function is as follows. Produces ATP from ADP in the presence of a proton gradient across the membrane. The catalytic sites are hosted primarily by the beta subunits. The protein is ATP synthase subunit beta of Bacillus licheniformis (strain ATCC 14580 / DSM 13 / JCM 2505 / CCUG 7422 / NBRC 12200 / NCIMB 9375 / NCTC 10341 / NRRL NRS-1264 / Gibson 46).